We begin with the raw amino-acid sequence, 27 residues long: GFMDLIKKAGGWLKKKGPALIKAALQE.

This sequence belongs to the ponericin-G family. Expressed by the venom gland.

It localises to the secreted. Its function is as follows. Shows a broad spectrum of activity against both Gram-positive and Gram-negative bacteria. Also has antimicrobial activity against S.cerevisiae. Has insecticidal and non-hemolytic activity. This chain is U1-poneritoxin-Na3b, found in Neoponera apicalis (Ant).